Reading from the N-terminus, the 254-residue chain is MNTNTPAHPPEGAPLSEATQAALASAEHAPDSPGATHIRSFVHRRGHITQRQRDALEQLMGKWSVPYAPRPLDMAAAFGRQAPTILEIGFGMGETTEKIALARPGDNFLGVEVFNAGVGSLLHRIEESAISNLRIVQHDAVEVVRDMIAPDSLAGVHVYFPDPWPKKRHHKRRLLQPPFVALLASRLAPGGYLHCATDWEDYAVQMLEVLGGEPLLRNTADGYAPRPDFRPQTKFETRGLRLGHGVWDLMFKRA.

The tract at residues Met1–Gly34 is disordered. 4 residues coordinate S-adenosyl-L-methionine: Glu87, Glu112, Asp139, and Asp162. Asp162 is an active-site residue. Residues Lys166, Asp198, and Thr233–Glu236 each bind substrate.

The protein belongs to the class I-like SAM-binding methyltransferase superfamily. TrmB family.

It carries out the reaction guanosine(46) in tRNA + S-adenosyl-L-methionine = N(7)-methylguanosine(46) in tRNA + S-adenosyl-L-homocysteine. Its pathway is tRNA modification; N(7)-methylguanine-tRNA biosynthesis. Catalyzes the formation of N(7)-methylguanine at position 46 (m7G46) in tRNA. The sequence is that of tRNA (guanine-N(7)-)-methyltransferase from Bordetella pertussis (strain Tohama I / ATCC BAA-589 / NCTC 13251).